The sequence spans 306 residues: Aspartate carbamoyltransferase catalytic subunit (306 aa).

Residues arginine 53 and threonine 54 each contribute to the carbamoyl phosphate site. Position 82 (lysine 82) interacts with L-aspartate. Residues arginine 103, histidine 131, and glutamine 134 each contribute to the carbamoyl phosphate site. Arginine 164 and arginine 226 together coordinate L-aspartate. Leucine 263 and proline 264 together coordinate carbamoyl phosphate.

Belongs to the aspartate/ornithine carbamoyltransferase superfamily. ATCase family. Heterododecamer (2C3:3R2) of six catalytic PyrB chains organized as two trimers (C3), and six regulatory PyrI chains organized as three dimers (R2).

The catalysed reaction is carbamoyl phosphate + L-aspartate = N-carbamoyl-L-aspartate + phosphate + H(+). Its pathway is pyrimidine metabolism; UMP biosynthesis via de novo pathway; (S)-dihydroorotate from bicarbonate: step 2/3. In terms of biological role, catalyzes the condensation of carbamoyl phosphate and aspartate to form carbamoyl aspartate and inorganic phosphate, the committed step in the de novo pyrimidine nucleotide biosynthesis pathway. This chain is Aspartate carbamoyltransferase catalytic subunit, found in Methanocaldococcus jannaschii (strain ATCC 43067 / DSM 2661 / JAL-1 / JCM 10045 / NBRC 100440) (Methanococcus jannaschii).